The primary structure comprises 232 residues: Orotate phosphoribosyltransferase (232 aa).

Residues Arg107, Lys108, Lys111, and 133–141 (EDLTTDGGS) each bind 5-phospho-alpha-D-ribose 1-diphosphate. Thr137 contributes to the orotate binding site.

This sequence belongs to the purine/pyrimidine phosphoribosyltransferase family. PyrE subfamily. In terms of assembly, homodimer. The cofactor is Mg(2+).

It carries out the reaction orotidine 5'-phosphate + diphosphate = orotate + 5-phospho-alpha-D-ribose 1-diphosphate. Its pathway is pyrimidine metabolism; UMP biosynthesis via de novo pathway; UMP from orotate: step 1/2. Functionally, catalyzes the transfer of a ribosyl phosphate group from 5-phosphoribose 1-diphosphate to orotate, leading to the formation of orotidine monophosphate (OMP). This Cereibacter sphaeroides (strain ATCC 17029 / ATH 2.4.9) (Rhodobacter sphaeroides) protein is Orotate phosphoribosyltransferase.